Consider the following 345-residue polypeptide: G-protein coupled receptor str-33 (345 aa).

The Extracellular segment spans residues 1–11 (MTVNLRDLSRT). A helical membrane pass occupies residues 12–32 (IAEFAFLTALVCNSLLIYLTA). The Cytoplasmic segment spans residues 33-37 (RRTKN). Residues 38 to 58 (ITGAYKYMIILFALLGLIFSC) traverse the membrane as a helical segment. Residues 59-92 (TEMLARPFVHNFNASFVYFSLSNDLSEFKSLVQM) lie on the Extracellular side of the membrane. Asn-71 carries N-linked (GlcNAc...) asparagine glycosylation. A helical membrane pass occupies residues 93-113 (LLVLYSGLYSSLISFVAVQFI). Residues 114–133 (YRYMVLVNANLLESWFTGWK) are Cytoplasmic-facing. A helical transmembrane segment spans residues 134–154 (LVFWVFYVIFFGFAWSASVYF). At 155 to 204 (CLFPDTYSYNYIRTEFKDVYNIGVDRVAIFILVAYEKHPSSEEYKLRPAS) the chain is on the extracellular side. A helical membrane pass occupies residues 205–225 (VIMIAGTISILVIQYSIMLFC). Residues 226 to 258 (GASMHRQMNEKLKNFSPDNQRLQKQFFKTLLLQ) are Cytoplasmic-facing. Residues 259 to 279 (ISVPTVLFHMPIFPVLLGPFF) traverse the membrane as a helical segment. The Extracellular segment spans residues 280-288 (NFEISAESG). Residues 289–309 (IIYSLFSLYPPIDGLIIMTVV) traverse the membrane as a helical segment. The Cytoplasmic segment spans residues 310–345 (TDYRIALTELFLGSHSGAQVEVIPVEVVSILNFSLL).

The protein belongs to the nematode receptor-like protein str family. Detected in ALM and PLM mechanosensory neurons and head neurons.

The protein resides in the cell membrane. Its function is as follows. Regulates egg-laying and locomotion. Likely to act upstream of goa-1 to suppress 5-hydroxytryptamine (5-HT) biosynthesis in hermaphrodite-specific neurons (HSNs) through inhibition of tph-1 transcription. This Caenorhabditis elegans protein is G-protein coupled receptor str-33.